Reading from the N-terminus, the 426-residue chain is Bone morphogenetic protein 7 (426 aa).

An N-terminal signal peptide occupies residues 1 to 22; sequence MNALTVKRRLPVLLFLFHISLS. Residues 23–282 constitute a propeptide that is removed on maturation; it reads SISSNTILEN…TSDIHLRSVR (260 aa). 3 N-linked (GlcNAc...) asparagine glycosylation sites follow: Asn-177, Asn-307, and Asn-367. 3 cysteine pairs are disulfide-bonded: Cys-325–Cys-391, Cys-354–Cys-423, and Cys-358–Cys-425.

Belongs to the TGF-beta family. As to quaternary structure, homodimer; disulfide-linked. Interacts with twsg1.

It localises to the secreted. Growth factor of the TGF-beta superfamily that plays important role in various biological processes, including embryogenesis, hematopoiesis, neurogenesis and skeletal morphogenesis. Initiates the canonical BMP signaling cascade by associating with type I receptor ACVR1 and type II receptor ACVR2A. Once all three components are bound together in a complex at the cell surface, ACVR2A phosphorylates and activates ACVR1. In turn, ACVR1 propagates signal by phosphorylating SMAD1/5/8 that travel to the nucleus and act as activators and repressors of transcription of target genes. The polypeptide is Bone morphogenetic protein 7 (bmp7) (Xenopus laevis (African clawed frog)).